A 469-amino-acid chain; its full sequence is Glutamate--tRNA ligase (469 aa).

The 'HIGH' region motif lies at 10–20; sequence PSPTGYLHVGG. Zn(2+) contacts are provided by cysteine 99, cysteine 101, cysteine 126, and aspartate 128. A 'KMSKS' region motif is present at residues 238–242; sequence RLSKR. Lysine 241 is a binding site for ATP.

This sequence belongs to the class-I aminoacyl-tRNA synthetase family. Glutamate--tRNA ligase type 1 subfamily. As to quaternary structure, monomer. Requires Zn(2+) as cofactor.

The protein localises to the cytoplasm. It carries out the reaction tRNA(Glu) + L-glutamate + ATP = L-glutamyl-tRNA(Glu) + AMP + diphosphate. In terms of biological role, catalyzes the attachment of glutamate to tRNA(Glu) in a two-step reaction: glutamate is first activated by ATP to form Glu-AMP and then transferred to the acceptor end of tRNA(Glu). The chain is Glutamate--tRNA ligase from Pelobacter propionicus (strain DSM 2379 / NBRC 103807 / OttBd1).